The primary structure comprises 541 residues: Calcium/calmodulin-dependent protein kinase kinase (541 aa).

The interval 83–106 (AVQEDDEAGPHSSNNLAATMSPNL) is disordered. Residues 93–106 (HSSNNLAATMSPNL) are compositionally biased toward polar residues. In terms of domain architecture, Protein kinase spans 130–411 (YRLMEEIGQG…LHEVKVHTWV (282 aa)). Residues 136–144 (IGQGSYGIV) and K159 each bind ATP. The tract at residues 169 to 190 (NFACFRQPPPRRNKENAAPSVL) is RP domain. Catalysis depends on D276, which acts as the Proton acceptor. The segment at 437–442 (ENCVRV) is autoinhibitory domain. Residues 440-465 (VRVIPRLDTLILVKAMGHRKRFGNPF) are calmodulin-binding. Residues 462–512 (GNPFRNKLSAQSSIRDRRKSSSVKDPTYVPPPNSPPATSNNNLNSTKVDRP) form a disordered region. Positions 497 to 507 (PATSNNNLNST) are enriched in low complexity.

It belongs to the protein kinase superfamily. Ser/Thr protein kinase family. It depends on Mg(2+) as a cofactor. Expressed in head and tail neurons and vulval muscles.

It localises to the cytoplasm. It catalyses the reaction L-seryl-[protein] + ATP = O-phospho-L-seryl-[protein] + ADP + H(+). The enzyme catalyses L-threonyl-[protein] + ATP = O-phospho-L-threonyl-[protein] + ADP + H(+). With respect to regulation, activated by Ca(2+)/calmodulin. Binding of calmodulin may relieve intrasteric autoinhibition. Calcium/calmodulin-dependent protein kinase which phosphorylates cmk-1. Component of a calcium-triggered signaling cascade involved in CRE-mediated transcriptional activation, probably through cmk-1-mediated crh-1/CREB phosphorylation. Plays a role in salt-avoidance learning behavior via the phosphorylation of cmk-1. This Caenorhabditis elegans protein is Calcium/calmodulin-dependent protein kinase kinase.